The chain runs to 223 residues: Cuticular glutathione peroxidase (223 aa).

Residues methionine 1 to alanine 19 form the signal peptide. A glycan (N-linked (GlcNAc...) asparagine) is linked at asparagine 39. Residue cysteine 74 is part of the active site. The N-linked (GlcNAc...) asparagine glycan is linked to asparagine 92.

This sequence belongs to the glutathione peroxidase family. In terms of assembly, homotetramer.

The protein resides in the secreted. The enzyme catalyses 2 glutathione + H2O2 = glutathione disulfide + 2 H2O. In terms of biological role, could inhibit the oxidative burst of leukocytes and neutralize the secondary products of lipid peroxidation, thus providing the resistance of these parasites to immune effector mechanisms and their persistence in the mammalian host. It may also be involved in the formation of cross-linking residues such as dityrosine, trityrosine and isotrityrosine identified in cuticular collagen. Highly cross-linked external cortex may also serve to protect the parasite from immune attack. This Brugia malayi (Filarial nematode worm) protein is Cuticular glutathione peroxidase.